The following is a 272-amino-acid chain: Indole-3-glycerol phosphate synthase (272 aa).

This sequence belongs to the TrpC family.

It catalyses the reaction 1-(2-carboxyphenylamino)-1-deoxy-D-ribulose 5-phosphate + H(+) = (1S,2R)-1-C-(indol-3-yl)glycerol 3-phosphate + CO2 + H2O. It participates in amino-acid biosynthesis; L-tryptophan biosynthesis; L-tryptophan from chorismate: step 4/5. The polypeptide is Indole-3-glycerol phosphate synthase (Mycobacterium sp. (strain JLS)).